The primary structure comprises 564 residues: Ribulokinase (564 aa).

It belongs to the ribulokinase family.

It catalyses the reaction D-ribulose + ATP = D-ribulose 5-phosphate + ADP + H(+). The enzyme catalyses L-ribulose + ATP = L-ribulose 5-phosphate + ADP + H(+). It functions in the pathway carbohydrate degradation; L-arabinose degradation via L-ribulose; D-xylulose 5-phosphate from L-arabinose (bacterial route): step 2/3. The polypeptide is Ribulokinase (Anoxybacillus flavithermus (strain DSM 21510 / WK1)).